The primary structure comprises 619 residues: Mitochondrial Rho GTPase 1 (619 aa).

The Cytoplasmic portion of the chain corresponds to 1–593 (MKKDVRILLV…TQADLKSSTF (593 aa)). In terms of domain architecture, Miro 1 spans 2–168 (KKDVRILLVG…FYYAQKAVLH (167 aa)). GTP is bound by residues arginine 14, glycine 16, lysine 17, threonine 18, and serine 19. Threonine 18 contacts Mg(2+). Mg(2+)-binding residues include proline 35 and aspartate 57. GTP is bound by residues serine 59, asparagine 118, lysine 119, aspartate 121, alanine 149, and lysine 150. 2 EF-hand domains span residues 184–219 (ACIK…CFNT) and 304–339 (HAYL…FPYM). 10 residues coordinate Ca(2+): aspartate 197, aspartate 199, aspartate 201, threonine 203, glutamate 208, aspartate 317, aspartate 319, aspartate 321, alanine 323, and glutamate 328. One can recognise a Miro 2 domain in the interval 417-580 (RNVFRCNVVG…FVKLTTMAMY (164 aa)). GTP-binding residues include glycine 429, cysteine 430, glycine 431, lysine 432, serine 433, glycine 434, arginine 448, lysine 529, aspartate 531, threonine 559, and cysteine 560. Glycine 429 contributes to the Mg(2+) binding site. A helical; Anchor for type IV membrane protein membrane pass occupies residues 594 to 616 (WLRASFGATVFAFLGFAMYKALI). Over 617 to 619 (KQR) the chain is Mitochondrial intermembrane.

This sequence belongs to the mitochondrial Rho GTPase family. Homodimer.

Its subcellular location is the mitochondrion outer membrane. The catalysed reaction is GTP + H2O = GDP + phosphate + H(+). It catalyses the reaction ATP + H2O = ADP + phosphate + H(+). It carries out the reaction UTP + H2O = UDP + phosphate + H(+). Its function is as follows. Atypical mitochondrial nucleoside-triphosphatase (NTPase) involved in mitochondrial trafficking. Probably involved in control of anterograde transport of mitochondria and their subcellular distribution. Can hydrolyze GTP, ATP and UTP. The chain is Mitochondrial Rho GTPase 1 (RHOT1) from Gallus gallus (Chicken).